The sequence spans 262 residues: Putative outer membrane protein CPn_1034/CP_0818/CPj1034/CpB1074 (262 aa).

An N-terminal signal peptide occupies residues 1–17; that stretch reads MKTWLFFTFLFSCSSFY.

It is found in the cell outer membrane. The polypeptide is Putative outer membrane protein CPn_1034/CP_0818/CPj1034/CpB1074 (Chlamydia pneumoniae (Chlamydophila pneumoniae)).